A 248-amino-acid polypeptide reads, in one-letter code: Tyrosine recombinase XerD-like (248 aa).

Residues 1 to 72 (MKSYIEPFIA…TANQFLYYLY (72 aa)) form the Core-binding (CB) domain. Residues 85 to 248 (DTMKVMRTEK…PVTLEKYYKS (164 aa)) enclose the Tyr recombinase domain. Active-site residues include Lys-149 and Arg-213. Tyr-245 acts as the O-(3'-phospho-DNA)-tyrosine intermediate in catalysis.

This sequence belongs to the 'phage' integrase family. XerD-like subfamily.

Its subcellular location is the cytoplasm. In terms of biological role, putative tyrosine recombinase. Not involved in the cutting and rejoining of the recombining DNA molecules on dif(SL) site. The protein is Tyrosine recombinase XerD-like of Streptococcus pyogenes serotype M28 (strain MGAS6180).